Here is a 31-residue protein sequence, read N- to C-terminus: Cytochrome b6-f complex subunit 6 (31 aa).

The chain crosses the membrane as a helical span at residues 4 to 24 (ITSYFGFLLAALTITSVLFIG).

The protein belongs to the PetL family. The 4 large subunits of the cytochrome b6-f complex are cytochrome b6, subunit IV (17 kDa polypeptide, PetD), cytochrome f and the Rieske protein, while the 4 small subunits are PetG, PetL, PetM and PetN. The complex functions as a dimer.

The protein localises to the plastid. It is found in the chloroplast thylakoid membrane. Its function is as follows. Component of the cytochrome b6-f complex, which mediates electron transfer between photosystem II (PSII) and photosystem I (PSI), cyclic electron flow around PSI, and state transitions. PetL is important for photoautotrophic growth as well as for electron transfer efficiency and stability of the cytochrome b6-f complex. This Arabidopsis thaliana (Mouse-ear cress) protein is Cytochrome b6-f complex subunit 6.